Consider the following 171-residue polypeptide: MLFIICLVFISCNVLREVKYQETWCFPAYGMVIGLWLMLSSIPQRRLVLNHTRGMYHFSIQGRTVCQGPMHLVYVRLALSSDAYGGRFFQLVLCGHKLEPLVLVQLSERYEQMEFLGRHLARKLNINYFDYLASSYRHVVRHWPLGASFSPGIVQRKTQVYTKSSVNDLDV.

At 1-2 (ML) the chain is on the cytoplasmic side. Residues 3-17 (FIICLVFISCNVLRE) form a helical membrane-spanning segment. Over 18–28 (VKYQETWCFPA) the chain is Extracellular. A helical membrane pass occupies residues 29 to 40 (YGMVIGLWLMLS). Over 41–171 (SIPQRRLVLN…TKSSVNDLDV (131 aa)) the chain is Cytoplasmic.

Component of the CatSper complex or CatSpermasome composed of the core pore-forming members CATSPER1, CATSPER2, CATSPER3 and CATSPER4 as well as auxiliary members CATSPERB, CATSPERG2, CATSPERD, CATSPERE, CATSPERZ, C2CD6/CATSPERT, SLCO6C1, TMEM249, TMEM262 and EFCAB9. HSPA1 may be an additional auxiliary complex member. The core complex members CATSPER1, CATSPER2, CATSPER3 and CATSPER4 form a heterotetrameric channel. The auxiliary CATSPERB, CATSPERG2, CATSPERD and CATSPERE subunits form a pavilion-like structure over the pore which stabilizes the complex through interactions with CATSPER4, CATSPER3, CATSPER1 and CATSPER2 respectively. SLCO6C1 interacts with CATSPERE and TMEM262/CATSPERH interacts with CATSPERB, further stabilizing the complex. C2CD6/CATSPERT interacts at least with CATSPERD and is required for targeting the CatSper complex in the flagellar membrane.

Its subcellular location is the cell projection. It is found in the cilium. It localises to the flagellum membrane. Its function is as follows. Auxiliary component of the CatSper complex, a complex involved in sperm cell hyperactivation. The sequence is that of Cation channel sperm-associated auxiliary subunit TMEM249 from Mus musculus (Mouse).